A 62-amino-acid polypeptide reads, in one-letter code: Large ribosomal subunit protein bL33c (62 aa).

Belongs to the bacterial ribosomal protein bL33 family.

The protein resides in the plastid. The protein localises to the chloroplast. The sequence is that of Large ribosomal subunit protein bL33c from Cyanidioschyzon merolae (strain NIES-3377 / 10D) (Unicellular red alga).